A 184-amino-acid chain; its full sequence is Adenine phosphoribosyltransferase (184 aa).

It belongs to the purine/pyrimidine phosphoribosyltransferase family. As to quaternary structure, homodimer.

Its subcellular location is the cytoplasm. The enzyme catalyses AMP + diphosphate = 5-phospho-alpha-D-ribose 1-diphosphate + adenine. It participates in purine metabolism; AMP biosynthesis via salvage pathway; AMP from adenine: step 1/1. Catalyzes a salvage reaction resulting in the formation of AMP, that is energically less costly than de novo synthesis. This is Adenine phosphoribosyltransferase from Parafrankia sp. (strain EAN1pec).